A 108-amino-acid chain; its full sequence is Large ribosomal subunit protein uL22 (108 aa).

The protein belongs to the universal ribosomal protein uL22 family. In terms of assembly, part of the 50S ribosomal subunit.

This protein binds specifically to 23S rRNA; its binding is stimulated by other ribosomal proteins, e.g. L4, L17, and L20. It is important during the early stages of 50S assembly. It makes multiple contacts with different domains of the 23S rRNA in the assembled 50S subunit and ribosome. Its function is as follows. The globular domain of the protein is located near the polypeptide exit tunnel on the outside of the subunit, while an extended beta-hairpin is found that lines the wall of the exit tunnel in the center of the 70S ribosome. This Nitratiruptor sp. (strain SB155-2) protein is Large ribosomal subunit protein uL22.